Reading from the N-terminus, the 125-residue chain is Photoactive yellow protein (125 aa).

In terms of domain architecture, PAS spans 23 to 86; it reads LDGLAFGAIQ…GKFKEGVASG (64 aa). Cys69 is modified (S-(4-hydroxycinnamyl)cysteine).

Belongs to the photoactive yellow protein family. In terms of assembly, monomer. The 4-hydroxycinnamic acid (p-coumaric acid) chromophore is covalently bound via a thioester linkage.

In terms of biological role, photoactive blue light protein. Probably functions as a photoreceptor for a negative phototaxis response. This is Photoactive yellow protein (pyp) from Halorhodospira halophila (Ectothiorhodospira halophila).